The primary structure comprises 188 residues: GMP synthase [glutamine-hydrolyzing] subunit A (188 aa).

The region spanning 1-188 is the Glutamine amidotransferase type-1 domain; sequence MIVIMDNGGQ…RNFAKLCGEL (188 aa). Residue cysteine 78 is the Nucleophile of the active site. Catalysis depends on residues histidine 165 and glutamate 167.

As to quaternary structure, heterodimer composed of a glutamine amidotransferase subunit (A) and a GMP-binding subunit (B).

It catalyses the reaction XMP + L-glutamine + ATP + H2O = GMP + L-glutamate + AMP + diphosphate + 2 H(+). It participates in purine metabolism; GMP biosynthesis; GMP from XMP (L-Gln route): step 1/1. Catalyzes the synthesis of GMP from XMP. In Pyrococcus abyssi (strain GE5 / Orsay), this protein is GMP synthase [glutamine-hydrolyzing] subunit A.